A 276-amino-acid polypeptide reads, in one-letter code: Pantothenate synthetase (276 aa).

An ATP-binding site is contributed by 27-34 (MGALHRGH). His34 functions as the Proton donor in the catalytic mechanism. Residue Gln58 coordinates (R)-pantoate. Position 58 (Gln58) interacts with beta-alanine. ATP is bound at residue 147–150 (GKKD). Residue Gln153 coordinates (R)-pantoate. Residues Val176 and 184-187 (LSSR) contribute to the ATP site.

Belongs to the pantothenate synthetase family. As to quaternary structure, homodimer.

It is found in the cytoplasm. The enzyme catalyses (R)-pantoate + beta-alanine + ATP = (R)-pantothenate + AMP + diphosphate + H(+). It functions in the pathway cofactor biosynthesis; (R)-pantothenate biosynthesis; (R)-pantothenate from (R)-pantoate and beta-alanine: step 1/1. Functionally, catalyzes the condensation of pantoate with beta-alanine in an ATP-dependent reaction via a pantoyl-adenylate intermediate. In Helicobacter pylori (strain J99 / ATCC 700824) (Campylobacter pylori J99), this protein is Pantothenate synthetase.